The primary structure comprises 320 residues: Large ribosomal subunit protein uL10y (320 aa).

A disordered region spans residues 289-320 (AGGGAPAAAKVEEKEESDEEDYGGDFGLFDEE). Over residues 302-320 (KEESDEEDYGGDFGLFDEE) the composition is skewed to acidic residues. Serine 305 is subject to Phosphoserine. Tyrosine 310 is modified (phosphotyrosine).

Belongs to the universal ribosomal protein uL10 family. In terms of assembly, P0 forms a pentameric complex by interaction with dimers of P1 and P2.

In terms of biological role, ribosomal protein P0 is the functional equivalent of E.coli protein L10. The protein is Large ribosomal subunit protein uL10y (RPP0B) of Arabidopsis thaliana (Mouse-ear cress).